Consider the following 1394-residue polypeptide: DNA-directed RNA polymerase subunit beta' (1394 aa).

The Zn(2+) site is built by cysteine 71, cysteine 73, cysteine 86, and cysteine 89. Mg(2+)-binding residues include aspartate 462, aspartate 464, and aspartate 466. Zn(2+) contacts are provided by cysteine 811, cysteine 885, cysteine 892, and cysteine 895.

The protein belongs to the RNA polymerase beta' chain family. As to quaternary structure, the RNAP catalytic core consists of 2 alpha, 1 beta, 1 beta' and 1 omega subunit. When a sigma factor is associated with the core the holoenzyme is formed, which can initiate transcription. Mg(2+) serves as cofactor. Zn(2+) is required as a cofactor.

The enzyme catalyses RNA(n) + a ribonucleoside 5'-triphosphate = RNA(n+1) + diphosphate. Functionally, DNA-dependent RNA polymerase catalyzes the transcription of DNA into RNA using the four ribonucleoside triphosphates as substrates. This is DNA-directed RNA polymerase subunit beta' from Xanthobacter autotrophicus (strain ATCC BAA-1158 / Py2).